The chain runs to 425 residues: MAEIIDIHAREILDSRGNPTVEVDVLLDSGAFGRAAVPSGASTGAHEAVELRDGDKTRYAGKGVLKAVEAVNGELFSALSGLDATDQLLIDQAMIDLDGTPNKARLGANAILGVSLACAKAAAEEAELPLYRYIGGARSHILPVPMMNIINGGQHADNPIDVQEFMIMPVSAPTVADAVRMGAEVFHALKKKLKDAGHNTNVGDEGGFAPNLASADEALAFIVKAIEAAGYKAGEDIVLALDAASSEFYKDGKYVLAGEGKTLDAEGMVKYYAELCKRYPILSIEDGCAEDDWAGWSLLTAELGAKVQLVGDDLFVTNPLRLAEGIRKGVANSILVKVNQIGTLSETLEAVEMAHKAGYTSVLSHRSGETEDSTIADIAVATNCGQIKTGSLSRSDRLAKYNQLIRIEEELGPVAVYAGASILRG.

(2R)-2-phosphoglycerate is bound at residue Gln163. Glu205 acts as the Proton donor in catalysis. Mg(2+)-binding residues include Asp242, Glu285, and Asp312. Residues Lys337, Arg366, Ser367, and Lys388 each contribute to the (2R)-2-phosphoglycerate site. Lys337 functions as the Proton acceptor in the catalytic mechanism.

It belongs to the enolase family. Mg(2+) is required as a cofactor.

The protein localises to the cytoplasm. It localises to the secreted. It is found in the cell surface. The catalysed reaction is (2R)-2-phosphoglycerate = phosphoenolpyruvate + H2O. Its pathway is carbohydrate degradation; glycolysis; pyruvate from D-glyceraldehyde 3-phosphate: step 4/5. Functionally, catalyzes the reversible conversion of 2-phosphoglycerate (2-PG) into phosphoenolpyruvate (PEP). It is essential for the degradation of carbohydrates via glycolysis. This is Enolase from Rhodospirillum rubrum (strain ATCC 11170 / ATH 1.1.1 / DSM 467 / LMG 4362 / NCIMB 8255 / S1).